We begin with the raw amino-acid sequence, 350 residues long: Zinc finger protein 367 (350 aa).

Residues 104-151 (SGLRGRGAPPPAASASAAASGGEDEEEASSPDSGHLKDGIRRGRPRAD) are disordered. The span at 137 to 151 (GHLKDGIRRGRPRAD) shows a compositional bias: basic and acidic residues. 2 consecutive C2H2-type zinc fingers follow at residues 167 to 189 (IRCN…KRTH) and 195 to 219 (YLCD…QRLH). The segment at 290–327 (KGKLVQKADQEQQDPLEYLQSDEEDDEKRGAQRRLQEQ) is disordered. A coiled-coil region spans residues 308–342 (LQSDEEDDEKRGAQRRLQEQRERLHGALALIELAN). A Phosphoserine modification is found at Ser310. A compositionally biased stretch (basic and acidic residues) spans 316–327 (EKRGAQRRLQEQ).

This sequence belongs to the krueppel C2H2-type zinc-finger protein family.

It is found in the nucleus. Its function is as follows. Transcriptional activator. Isoform 1 may be involved in transcriptional activation of erythroid genes. This is Zinc finger protein 367 (ZNF367) from Homo sapiens (Human).